We begin with the raw amino-acid sequence, 419 residues long: Putative zinc metalloprotease SP_0263 (419 aa).

Residue His18 coordinates Zn(2+). Residue Glu19 is part of the active site. His22 contributes to the Zn(2+) binding site. 3 consecutive transmembrane segments (helical) span residues 169-191 (LITN…WVLI), 345-367 (ILYF…IPAL), and 388-410 (EIET…AVTW).

Belongs to the peptidase M50B family. The cofactor is Zn(2+).

Its subcellular location is the cell membrane. This is Putative zinc metalloprotease SP_0263 from Streptococcus pneumoniae serotype 4 (strain ATCC BAA-334 / TIGR4).